We begin with the raw amino-acid sequence, 342 residues long: Phosphoribosylformylglycinamidine cyclo-ligase (342 aa).

This sequence belongs to the AIR synthase family.

The protein resides in the cytoplasm. The enzyme catalyses 2-formamido-N(1)-(5-O-phospho-beta-D-ribosyl)acetamidine + ATP = 5-amino-1-(5-phospho-beta-D-ribosyl)imidazole + ADP + phosphate + H(+). Its pathway is purine metabolism; IMP biosynthesis via de novo pathway; 5-amino-1-(5-phospho-D-ribosyl)imidazole from N(2)-formyl-N(1)-(5-phospho-D-ribosyl)glycinamide: step 2/2. This chain is Phosphoribosylformylglycinamidine cyclo-ligase, found in Staphylococcus aureus (strain MRSA252).